Here is a 190-residue protein sequence, read N- to C-terminus: Large ribosomal subunit protein eL19 (190 aa).

Disordered stretches follow at residues 56 to 85 (TVHS…KGTK) and 166 to 190 (NRAA…EAAN). Residues 72 to 83 (AGRHMGYGKRKG) show a composition bias toward basic residues. Over residues 166-184 (NRAARERRQQRLAEKKEAL) the composition is skewed to basic and acidic residues.

The protein belongs to the eukaryotic ribosomal protein eL19 family. As to quaternary structure, component of the large ribosomal subunit. Mature ribosomes consist of a small (40S) and a large (60S) subunit. The 40S subunit contains about 32 different proteins and 1 molecule of RNA (18S). The 60S subunit contains 45 different proteins and 3 molecules of RNA (25S, 5.8S and 5S).

It is found in the cytoplasm. In terms of biological role, component of the ribosome, a large ribonucleoprotein complex responsible for the synthesis of proteins in the cell. The small ribosomal subunit (SSU) binds messenger RNAs (mRNAs) and translates the encoded message by selecting cognate aminoacyl-transfer RNA (tRNA) molecules. The large subunit (LSU) contains the ribosomal catalytic site termed the peptidyl transferase center (PTC), which catalyzes the formation of peptide bonds, thereby polymerizing the amino acids delivered by tRNAs into a polypeptide chain. The nascent polypeptides leave the ribosome through a tunnel in the LSU and interact with protein factors that function in enzymatic processing, targeting, and the membrane insertion of nascent chains at the exit of the ribosomal tunnel. RPL19A may play a role in the last stages of translation initiation, in particular subunit joining and shedding/releasing factors. In Candida albicans (strain SC5314 / ATCC MYA-2876) (Yeast), this protein is Large ribosomal subunit protein eL19.